Here is a 238-residue protein sequence, read N- to C-terminus: Lipid transferase CIDEC (238 aa).

The interval 1-35 is required for liquid-liquid phase separation (LLPS); sequence MDYAMKSLSLLYPRSLSRHVAVSTAVVTQQLVSEP. A CIDE-N domain is found at 41–118; sequence RARPCRVSTA…VLQKGQKWKS (78 aa).

This sequence belongs to the CIDE family. As to quaternary structure, homodimer. Interacts with CIDEA. Homooligomer; undergoes liquid-liquid phase separation (LLPS) via its N-terminus, facilitating lipid droplet fusion, occurs at the lipid droplet contact sites. Interacts with PLIN1. Interacts with NFAT5; this interaction is direct and retains NFAT5 in the cytoplasm. Interacts with CEBPB. Interacts with isoform CLSTN3beta of CLSTN3; inhibiting the lipid transferase activity of CIDEC. In terms of processing, ubiquitinated and targeted to proteasomal degradation, resulting in a short half-life (about 15 minutes in 3T3-L1 cells). Protein stability depends on triaclyglycerol synthesis, fatty acid availability and lipid droplet formation.

Its subcellular location is the lipid droplet. The protein localises to the endoplasmic reticulum. It localises to the nucleus. The enzyme catalyses a triacyl-sn-glycerol(in) = a triacyl-sn-glycerol(out). Functionally, lipid transferase specifically expressed in white adipose tissue, which promotes unilocular lipid droplet formation by mediating lipid droplet fusion. Lipid droplet fusion promotes their enlargement, restricting lipolysis and favoring lipid storage. Localizes on the lipid droplet surface, at focal contact sites between lipid droplets, and mediates atypical lipid droplet fusion by undergoing liquid-liquid phase separation (LLPS) and promoting directional net neutral lipid transfer from the smaller to larger lipid droplets. The transfer direction may be driven by the internal pressure difference between the contacting lipid droplet pair. Its role in neutral lipid transfer and lipid droplet enlargement is activated by the interaction with PLIN1. May also act as a CEBPB coactivator in the white adipose tissue to control the expression of a subset of CEBPB downstream target genes, including SOCS1, SOCS3, TGFB1, TGFBR1, ID2 and XDH. When overexpressed in preadipocytes, induces apoptosis or increases cell susceptibility to apoptosis induced by serum deprivation or TGFB treatment. This chain is Lipid transferase CIDEC, found in Rattus norvegicus (Rat).